Here is a 218-residue protein sequence, read N- to C-terminus: Thiopurine S-methyltransferase (218 aa).

S-adenosyl-L-methionine contacts are provided by tryptophan 10, leucine 45, glutamate 66, and arginine 123.

It belongs to the class I-like SAM-binding methyltransferase superfamily. TPMT family.

It is found in the cytoplasm. It carries out the reaction S-adenosyl-L-methionine + a thiopurine = S-adenosyl-L-homocysteine + a thiopurine S-methylether.. In Shewanella baltica (strain OS195), this protein is Thiopurine S-methyltransferase.